The primary structure comprises 681 residues: UvrABC system protein B (681 aa).

A Helicase ATP-binding domain is found at 30 to 419 (QGVRDGRHWQ…GEVVELLVRP (390 aa)). 43-50 (GVTGSGKT) lines the ATP pocket. The Beta-hairpin motif lies at 96–119 (YYDFYQPEAYLPSLDKYIAKDLRI). A Helicase C-terminal domain is found at 435–601 (QIDNLLAEIR…SIVKSVDQIL (167 aa)). One can recognise a UVR domain in the interval 641-676 (YAIVEGLRLEMQEAAEHMEYEKAAYLRDEITKMEQV).

Belongs to the UvrB family. In terms of assembly, forms a heterotetramer with UvrA during the search for lesions. Interacts with UvrC in an incision complex.

Its subcellular location is the cytoplasm. The UvrABC repair system catalyzes the recognition and processing of DNA lesions. A damage recognition complex composed of 2 UvrA and 2 UvrB subunits scans DNA for abnormalities. Upon binding of the UvrA(2)B(2) complex to a putative damaged site, the DNA wraps around one UvrB monomer. DNA wrap is dependent on ATP binding by UvrB and probably causes local melting of the DNA helix, facilitating insertion of UvrB beta-hairpin between the DNA strands. Then UvrB probes one DNA strand for the presence of a lesion. If a lesion is found the UvrA subunits dissociate and the UvrB-DNA preincision complex is formed. This complex is subsequently bound by UvrC and the second UvrB is released. If no lesion is found, the DNA wraps around the other UvrB subunit that will check the other stand for damage. The polypeptide is UvrABC system protein B (Chlorobium chlorochromatii (strain CaD3)).